An 893-amino-acid polypeptide reads, in one-letter code: MNESSHRITPMLEQYLSIKSNYPDTLLFYRMGDFYELFFEDAETAARELQIALTARNPRAENPVPMCGVPWHAADSYIHQLIQKGYKVALCEQTEDFRESKGLVQRKVTRVFTSATTTEETSLDPKTHTYLGAMYWDEEVNIGAFCWADVSTGLWTGIQVKKKSELWQWIQKILPKELLFPEKYELPATAKLIEIQFVPLPYKTHFEYPQAVKRLLQAQGVADLEALGLEKHTILVQACGALVAYLEQTQLQDVNHLMPFKPLDIGKYVILDEITEKNLELFKRVNGKKGVGTLIHVLDHTLTPMGGRLLEERLHHPWRDITTILENQSVLEWLILYKENMKKLQDALKAIYDLERLSTRIVLNRTSPKDLLALKNTLLILPRVKDALIVEINVKDNRYITIDESILSTMPTILRQLLTKWDNISDYAEKLDKALDENPPNSIVEGGLFKLGFNAELDELMDLLEHGESKLQALLEKEQKVNNLPRLKIGFNRVFGYYFELTKSAGTPPSHFVRRQTLANAERYTTEELKDLEERLLSATEKRNTLEYKLFQKLREELVSIRPRILFMASLIAQLDLWQSLADVAIRHNWNKPTLLTNNNIFIREGRHPVIESIIGKSVFVPNDLVMDETRRMLLITGPNMAGKSTVLRQTAIICLLAHMGSFVPATEAQIGICDRIFSRVGASDNLARGQSTFMVEMMETARILRQATSRSLVILDEIGRGTSTFDGLALAWAVAEDLVCKDHDGVRTLFATHYHELTALEEKLTGVHTMTIAIRHWNDELVFLYRLIPGPADRSYGIEVARLAGVPQSVIQRAKIILTQLEQTHQQPRSLLNLLPGVVQNANEELSKQDVKVVEHPVVTLLKEMNPETLTPLDALKSLVEWKLLYGTTHAT.

638 to 645 (GPNMAGKS) contacts ATP.

This sequence belongs to the DNA mismatch repair MutS family.

Its function is as follows. This protein is involved in the repair of mismatches in DNA. It is possible that it carries out the mismatch recognition step. This protein has a weak ATPase activity. The chain is DNA mismatch repair protein MutS from Lawsonia intracellularis (strain PHE/MN1-00).